The chain runs to 152 residues: Globin, minor (152 aa).

The region spanning 12–152 is the Globin domain; sequence VNNSYHKDLL…ALIAVVQAAL (141 aa). Residue histidine 104 coordinates heme b.

This sequence belongs to the globin family.

This Anadara trapezia (Sydney cockle) protein is Globin, minor.